A 300-amino-acid chain; its full sequence is Tyrosine recombinase XerC (300 aa).

The Core-binding (CB) domain maps to 2-88 (IQEGKLEQQF…SLRSFYTFLL (87 aa)). The region spanning 109–294 (RLPKFFYSEE…TKEHLKSTYM (186 aa)) is the Tyr recombinase domain. Residues R150, K174, H246, R249, and H272 contribute to the active site. Y281 functions as the O-(3'-phospho-DNA)-tyrosine intermediate in the catalytic mechanism.

This sequence belongs to the 'phage' integrase family. XerC subfamily. In terms of assembly, forms a cyclic heterotetrameric complex composed of two molecules of XerC and two molecules of XerD.

It is found in the cytoplasm. Site-specific tyrosine recombinase, which acts by catalyzing the cutting and rejoining of the recombining DNA molecules. The XerC-XerD complex is essential to convert dimers of the bacterial chromosome into monomers to permit their segregation at cell division. It also contributes to the segregational stability of plasmids. This Listeria monocytogenes serotype 4b (strain F2365) protein is Tyrosine recombinase XerC.